We begin with the raw amino-acid sequence, 494 residues long: MKTIAFDSNKYLNLQRDHILERISQFDGKLYMEFGGKMLEDYHAARVLPGYEPDNKIKLLKELKEQVEIVIAINANNIEHSKARGDLGISYDQEVFRLIDKFNTLDIYVGSVVITQYNNQPAADAFRKQLEKNGIASYLHYPIKGYPTDINHIISSEGMGKNDYIKTSRNLIVVTAPGPGSGKLATCMSQMYHDQINGVKSGYAKFETFPVWNLPLHHPVNLAYEAATADLDDVNMIDPFHLETYGKTAVNYNRDIEVFPVLNRTFERILSKSPYASPTDMGVNMVGFSIVNEEAAIEASKQEIIRRYYQTLVDFKAERVTESAVKKIELLMNDIGVTPDDRHVTVAAHQKAEQTGQPALALQLPNGQIVTGKTSGLFGPTAAVIINAIKTLAKIDKTTHLIEPEYVKPIQGLKVNHLGSHNPRLHSNEILIALAITAMTSEEANLAMKELGNLKGSEAHSTVILTEEDKNVLRKLGVNITFDPVYQHHKLYRK.

The protein belongs to the UPF0371 family.

This Streptococcus pyogenes serotype M3 (strain ATCC BAA-595 / MGAS315) protein is UPF0371 protein SpyM3_1021.